Reading from the N-terminus, the 130-residue chain is Anti-adapter protein IraD (130 aa).

It belongs to the GpW/Gp25 family. IraD subfamily. In terms of assembly, interacts with RssB.

The protein localises to the cytoplasm. Its function is as follows. Inhibits RpoS proteolysis by regulating RssB activity, thereby increasing the stability of the sigma stress factor RpoS during oxidative stress. Its effect on RpoS stability is due to its interaction with RssB, which probably blocks the interaction of RssB with RpoS, and the consequent delivery of the RssB-RpoS complex to the ClpXP protein degradation pathway. In Escherichia coli O157:H7, this protein is Anti-adapter protein IraD.